A 237-amino-acid chain; its full sequence is Ribosomal RNA small subunit methyltransferase G (237 aa).

S-adenosyl-L-methionine contacts are provided by residues glycine 78, phenylalanine 83, 129–130 (AE), and arginine 148. The tract at residues 218-237 (KKETPNKFPRKAGMPNKRPL) is disordered.

This sequence belongs to the methyltransferase superfamily. RNA methyltransferase RsmG family.

Its subcellular location is the cytoplasm. In terms of biological role, specifically methylates the N7 position of a guanine in 16S rRNA. The chain is Ribosomal RNA small subunit methyltransferase G from Streptococcus suis (strain 98HAH33).